The chain runs to 168 residues: Gamma-glutamylaminecyclotransferase (168 aa).

The segment at 1–20 (MPGPECKWSTTETGAPCGTD) is disordered. Position 32–35 (32–35 (YGTL)) interacts with substrate. Glu-107 serves as the catalytic Proton acceptor.

It belongs to the gamma-glutamylcyclotransferase family. Monomer.

The enzyme catalyses epsilon-(gamma-L-glutamyl)-L-lysine = 5-oxo-L-proline + L-lysine. In terms of biological role, contributes to degradation of proteins cross-linked by transglutaminases by degrading the cross-link between a lysine and a glutamic acid residue. Catalyzes the formation of 5-oxo-L-proline from L-gamma-glutamyl-L-epsilon-lysine. Inactive with L-gamma-glutamyl-alpha-amino acid substrates such as L-gamma-glutamyl-L-alpha-cysteine and L-gamma-glutamyl-L-alpha-alanine. This chain is Gamma-glutamylaminecyclotransferase (GGACT), found in Bos taurus (Bovine).